Reading from the N-terminus, the 505-residue chain is ATP synthase subunit alpha (505 aa).

169 to 176 (GDRKTGKT) contributes to the ATP binding site.

It belongs to the ATPase alpha/beta chains family. F-type ATPases have 2 components, CF(1) - the catalytic core - and CF(0) - the membrane proton channel. CF(1) has five subunits: alpha(3), beta(3), gamma(1), delta(1), epsilon(1). CF(0) has three main subunits: a(1), b(2) and c(9-12). The alpha and beta chains form an alternating ring which encloses part of the gamma chain. CF(1) is attached to CF(0) by a central stalk formed by the gamma and epsilon chains, while a peripheral stalk is formed by the delta and b chains.

The protein resides in the cell membrane. It carries out the reaction ATP + H2O + 4 H(+)(in) = ADP + phosphate + 5 H(+)(out). In terms of biological role, produces ATP from ADP in the presence of a proton gradient across the membrane. The alpha chain is a regulatory subunit. The sequence is that of ATP synthase subunit alpha from Pediococcus pentosaceus (strain ATCC 25745 / CCUG 21536 / LMG 10740 / 183-1w).